The primary structure comprises 361 residues: Dihydroorotate dehydrogenase (quinone) (361 aa).

Residues 67–71 and T91 each bind FMN; that span reads AGLDK. K71 provides a ligand contact to substrate. 116-120 provides a ligand contact to substrate; that stretch reads NRMGF. Residues N145 and N178 each coordinate FMN. N178 contacts substrate. S181 acts as the Nucleophile in catalysis. N183 contacts substrate. FMN is bound by residues K223 and G251. 252-253 serves as a coordination point for substrate; it reads NT. Residues G273, G302, and 323–324 each bind FMN; that span reads YT.

The protein belongs to the dihydroorotate dehydrogenase family. Type 2 subfamily. In terms of assembly, monomer. The cofactor is FMN.

The protein resides in the cell membrane. The enzyme catalyses (S)-dihydroorotate + a quinone = orotate + a quinol. It participates in pyrimidine metabolism; UMP biosynthesis via de novo pathway; orotate from (S)-dihydroorotate (quinone route): step 1/1. Its function is as follows. Catalyzes the conversion of dihydroorotate to orotate with quinone as electron acceptor. This Deinococcus geothermalis (strain DSM 11300 / CIP 105573 / AG-3a) protein is Dihydroorotate dehydrogenase (quinone).